We begin with the raw amino-acid sequence, 120 residues long: NAD(P)H-quinone oxidoreductase subunit 3, chloroplastic (120 aa).

A run of 3 helical transmembrane segments spans residues 10-30 (FWFFLIIGAIIPTLAFTTSKL), 64-84 (MFALVFVIFDVETIFLYPWAM), and 89-109 (LGVYGFIEALIFVLILVIGLV).

Belongs to the complex I subunit 3 family. NDH is composed of at least 16 different subunits, 5 of which are encoded in the nucleus.

The protein resides in the plastid. The protein localises to the chloroplast thylakoid membrane. The enzyme catalyses a plastoquinone + NADH + (n+1) H(+)(in) = a plastoquinol + NAD(+) + n H(+)(out). It carries out the reaction a plastoquinone + NADPH + (n+1) H(+)(in) = a plastoquinol + NADP(+) + n H(+)(out). Its function is as follows. NDH shuttles electrons from NAD(P)H:plastoquinone, via FMN and iron-sulfur (Fe-S) centers, to quinones in the photosynthetic chain and possibly in a chloroplast respiratory chain. The immediate electron acceptor for the enzyme in this species is believed to be plastoquinone. Couples the redox reaction to proton translocation, and thus conserves the redox energy in a proton gradient. The protein is NAD(P)H-quinone oxidoreductase subunit 3, chloroplastic of Chaetosphaeridium globosum (Charophycean green alga).